Reading from the N-terminus, the 447-residue chain is Serine/threonine-protein phosphatase 2A 55 kDa regulatory subunit B gamma isoform (447 aa).

WD repeat units follow at residues 22–61 (TEADIISTVEFNHTGELLATGDKGGRVVIFQREPESKNAP), 87–128 (EIEE…KRPE), 171–209 (GHTYHINSISVNSDCETYMSADDLRINLWHLAVTDRSFN), 220–260 (DLTE…LCDK), 279–317 (EIISSVSDVKFSHSGRYMLTRDYLTVKVWDLNMEARPIE), 334–375 (ENDC…DVTL), and 410–446 (DFTKKILHTAWHPAENIIAIAATNNLYIFQDKVNSDV).

The protein belongs to the phosphatase 2A regulatory subunit B family. PP2A consists of a common heterodimeric core enzyme, composed of a 36 kDa catalytic subunit (subunit C) and a 65 kDa constant regulatory subunit (PR65 or subunit A), that associates with a variety of regulatory subunits. Proteins that associate with the core dimer include three families of regulatory subunits B (the R2/B/PR55/B55, R3/B''/PR72/PR130/PR59 and R5/B'/B56 families), the 48 kDa variable regulatory subunit, viral proteins, and cell signaling molecules. Interacts with IER5. Highly expressed in brain.

The B regulatory subunit might modulate substrate selectivity and catalytic activity, and might also direct the localization of the catalytic enzyme to a particular subcellular compartment. The protein is Serine/threonine-protein phosphatase 2A 55 kDa regulatory subunit B gamma isoform (PPP2R2C) of Oryctolagus cuniculus (Rabbit).